A 197-amino-acid polypeptide reads, in one-letter code: 3-isopropylmalate dehydratase small subunit (197 aa).

It belongs to the LeuD family. LeuD type 1 subfamily. Heterodimer of LeuC and LeuD.

The catalysed reaction is (2R,3S)-3-isopropylmalate = (2S)-2-isopropylmalate. It participates in amino-acid biosynthesis; L-leucine biosynthesis; L-leucine from 3-methyl-2-oxobutanoate: step 2/4. Functionally, catalyzes the isomerization between 2-isopropylmalate and 3-isopropylmalate, via the formation of 2-isopropylmaleate. This is 3-isopropylmalate dehydratase small subunit from Mycolicibacterium vanbaalenii (strain DSM 7251 / JCM 13017 / BCRC 16820 / KCTC 9966 / NRRL B-24157 / PYR-1) (Mycobacterium vanbaalenii).